We begin with the raw amino-acid sequence, 239 residues long: Ribonuclease PH (239 aa).

Residues Arg87 and Gly125–Arg127 each bind phosphate.

Belongs to the RNase PH family. As to quaternary structure, homohexameric ring arranged as a trimer of dimers.

It catalyses the reaction tRNA(n+1) + phosphate = tRNA(n) + a ribonucleoside 5'-diphosphate. In terms of biological role, phosphorolytic 3'-5' exoribonuclease that plays an important role in tRNA 3'-end maturation. Removes nucleotide residues following the 3'-CCA terminus of tRNAs; can also add nucleotides to the ends of RNA molecules by using nucleoside diphosphates as substrates, but this may not be physiologically important. Probably plays a role in initiation of 16S rRNA degradation (leading to ribosome degradation) during starvation. This Dehalococcoides mccartyi (strain ATCC BAA-2266 / KCTC 15142 / 195) (Dehalococcoides ethenogenes (strain 195)) protein is Ribonuclease PH.